Consider the following 105-residue polypeptide: Spermatogenesis-associated protein 8 (105 aa).

Expressed at high levels in adult testis, at moderate levels in sperm and at low levels in fetal testis. Not detected in other tissues.

In Homo sapiens (Human), this protein is Spermatogenesis-associated protein 8 (SPATA8).